Here is a 144-residue protein sequence, read N- to C-terminus: PE family protein PE9 (144 aa).

The PE domain maps to 1–87 (MSYMIATPAA…RTLTGGCGVF (87 aa)). Positions 98-124 (AAEHRAAGAGRRQRRRRSGDGQWRLRQ) are disordered.

The protein belongs to the mycobacterial PE family. In terms of assembly, forms a complex with PE10. The complex interacts with human TLR4.

The protein resides in the secreted. It localises to the cell wall. Its subcellular location is the cell surface. In terms of biological role, together with PE10, induces macrophage apoptosis through human Toll-like receptor 4 (TLR4) signaling pathway. Interaction with TLR4 leads to increased levels of phospho-IRF-3, increase in the transcript levels of IFN-beta and pro-apoptotic genes, up-regulation of IL-10, down-regulation of IL-1b and enhanced levels of macrophage apoptosis. This chain is PE family protein PE9, found in Mycobacterium tuberculosis (strain ATCC 25618 / H37Rv).